The following is a 447-amino-acid chain: N-succinylarginine dihydrolase (447 aa).

Residues 19 to 28, Asn-110, and 137 to 138 contribute to the substrate site; these read AGLSFGNEAS and HR. Residue Glu-174 is part of the active site. Arg-212 contacts substrate. Residue His-248 is part of the active site. 2 residues coordinate substrate: Asp-250 and Asn-359. Cys-365 functions as the Nucleophile in the catalytic mechanism.

This sequence belongs to the succinylarginine dihydrolase family. As to quaternary structure, homodimer.

It catalyses the reaction N(2)-succinyl-L-arginine + 2 H2O + 2 H(+) = N(2)-succinyl-L-ornithine + 2 NH4(+) + CO2. Its pathway is amino-acid degradation; L-arginine degradation via AST pathway; L-glutamate and succinate from L-arginine: step 2/5. Functionally, catalyzes the hydrolysis of N(2)-succinylarginine into N(2)-succinylornithine, ammonia and CO(2). This is N-succinylarginine dihydrolase from Escherichia coli O9:H4 (strain HS).